A 326-amino-acid chain; its full sequence is tRNA(Ile)-lysidine synthase (326 aa).

23 to 28 (SGGVDS) lines the ATP pocket.

The protein belongs to the tRNA(Ile)-lysidine synthase family.

Its subcellular location is the cytoplasm. The enzyme catalyses cytidine(34) in tRNA(Ile2) + L-lysine + ATP = lysidine(34) in tRNA(Ile2) + AMP + diphosphate + H(+). Ligates lysine onto the cytidine present at position 34 of the AUA codon-specific tRNA(Ile) that contains the anticodon CAU, in an ATP-dependent manner. Cytidine is converted to lysidine, thus changing the amino acid specificity of the tRNA from methionine to isoleucine. The polypeptide is tRNA(Ile)-lysidine synthase (Wolinella succinogenes (strain ATCC 29543 / DSM 1740 / CCUG 13145 / JCM 31913 / LMG 7466 / NCTC 11488 / FDC 602W) (Vibrio succinogenes)).